A 651-amino-acid polypeptide reads, in one-letter code: Beta-mannosyltransferase 7 (651 aa).

At Met-1 to Asn-19 the chain is on the cytoplasmic side. A helical transmembrane segment spans residues Leu-20–Ser-42. Residues Arg-43–Thr-651 lie on the Extracellular side of the membrane. Asn-271 and Asn-423 each carry an N-linked (GlcNAc...) asparagine glycan.

The protein belongs to the BMT family.

Its subcellular location is the membrane. Its function is as follows. Beta-mannosyltransferase involved in cell wall biosynthesis through beta-1,2-mannosylation of cell wall phosphopeptidomannan. This chain is Beta-mannosyltransferase 7 (BMT7), found in Candida albicans (strain SC5314 / ATCC MYA-2876) (Yeast).